Reading from the N-terminus, the 312-residue chain is Ribonuclease Z (312 aa).

Histidine 63, histidine 65, aspartate 67, histidine 68, histidine 141, aspartate 212, and histidine 270 together coordinate Zn(2+). The Proton acceptor role is filled by aspartate 67.

Belongs to the RNase Z family. In terms of assembly, homodimer. Requires Zn(2+) as cofactor.

The catalysed reaction is Endonucleolytic cleavage of RNA, removing extra 3' nucleotides from tRNA precursor, generating 3' termini of tRNAs. A 3'-hydroxy group is left at the tRNA terminus and a 5'-phosphoryl group is left at the trailer molecule.. Its function is as follows. Zinc phosphodiesterase, which displays some tRNA 3'-processing endonuclease activity. Probably involved in tRNA maturation, by removing a 3'-trailer from precursor tRNA. The sequence is that of Ribonuclease Z from Lactobacillus acidophilus (strain ATCC 700396 / NCK56 / N2 / NCFM).